Consider the following 418-residue polypeptide: F-box protein At1g10780 (418 aa).

Positions 1-47 constitute an F-box domain; the sequence is MDSLPDAILQYILSYLTSARDVAACNCVSKRWKESTDSVKSVVFHRN.

This chain is F-box protein At1g10780, found in Arabidopsis thaliana (Mouse-ear cress).